A 424-amino-acid chain; its full sequence is N-succinylarginine dihydrolase (424 aa).

Residues 19 to 28 (AGLSPGNIAS), asparagine 110, and 137 to 138 (HR) contribute to the substrate site. Glutamate 174 is an active-site residue. Residue arginine 207 participates in substrate binding. The active site involves histidine 240. The substrate site is built by aspartate 242 and asparagine 349. Cysteine 355 (nucleophile) is an active-site residue.

The protein belongs to the succinylarginine dihydrolase family. As to quaternary structure, homodimer.

The catalysed reaction is N(2)-succinyl-L-arginine + 2 H2O + 2 H(+) = N(2)-succinyl-L-ornithine + 2 NH4(+) + CO2. The protein operates within amino-acid degradation; L-arginine degradation via AST pathway; L-glutamate and succinate from L-arginine: step 2/5. In terms of biological role, catalyzes the hydrolysis of N(2)-succinylarginine into N(2)-succinylornithine, ammonia and CO(2). This is N-succinylarginine dihydrolase from Rhizorhabdus wittichii (strain DSM 6014 / CCUG 31198 / JCM 15750 / NBRC 105917 / EY 4224 / RW1) (Sphingomonas wittichii).